The following is a 547-amino-acid chain: 2-succinyl-5-enolpyruvyl-6-hydroxy-3-cyclohexene-1-carboxylate synthase (547 aa).

This sequence belongs to the TPP enzyme family. MenD subfamily. In terms of assembly, homodimer. It depends on Mg(2+) as a cofactor. Mn(2+) is required as a cofactor. The cofactor is thiamine diphosphate.

It carries out the reaction isochorismate + 2-oxoglutarate + H(+) = 5-enolpyruvoyl-6-hydroxy-2-succinyl-cyclohex-3-ene-1-carboxylate + CO2. Its pathway is quinol/quinone metabolism; 1,4-dihydroxy-2-naphthoate biosynthesis; 1,4-dihydroxy-2-naphthoate from chorismate: step 2/7. The protein operates within quinol/quinone metabolism; menaquinone biosynthesis. Its function is as follows. Catalyzes the thiamine diphosphate-dependent decarboxylation of 2-oxoglutarate and the subsequent addition of the resulting succinic semialdehyde-thiamine pyrophosphate anion to isochorismate to yield 2-succinyl-5-enolpyruvyl-6-hydroxy-3-cyclohexene-1-carboxylate (SEPHCHC). This is 2-succinyl-5-enolpyruvyl-6-hydroxy-3-cyclohexene-1-carboxylate synthase from Mycobacterium sp. (strain JLS).